Here is a 34-residue protein sequence, read N- to C-terminus: Photosystem II reaction center protein T (34 aa).

Residues 3-23 (ALVYTFLLVGTLGIIFFAIFF) form a helical membrane-spanning segment.

This sequence belongs to the PsbT family. PSII is composed of 1 copy each of membrane proteins PsbA, PsbB, PsbC, PsbD, PsbE, PsbF, PsbH, PsbI, PsbJ, PsbK, PsbL, PsbM, PsbT, PsbY, PsbZ, Psb30/Ycf12, at least 3 peripheral proteins of the oxygen-evolving complex and a large number of cofactors. It forms dimeric complexes.

The protein resides in the plastid. It is found in the chloroplast thylakoid membrane. In terms of biological role, found at the monomer-monomer interface of the photosystem II (PS II) dimer, plays a role in assembly and dimerization of PSII. PSII is a light-driven water plastoquinone oxidoreductase, using light energy to abstract electrons from H(2)O, generating a proton gradient subsequently used for ATP formation. This is Photosystem II reaction center protein T from Klebsormidium bilatum (Filamentous green alga).